Consider the following 212-residue polypeptide: Ion-translocating oxidoreductase complex subunit G (212 aa).

A helical transmembrane segment spans residues 9–29 (GLLLALFALLCTGLVAVVNQQ). Residue threonine 176 is modified to FMN phosphoryl threonine.

This sequence belongs to the RnfG family. In terms of assembly, the complex is composed of six subunits: RnfA, RnfB, RnfC, RnfD, RnfE and RnfG. Requires FMN as cofactor.

It is found in the cell inner membrane. In terms of biological role, part of a membrane-bound complex that couples electron transfer with translocation of ions across the membrane. The polypeptide is Ion-translocating oxidoreductase complex subunit G (Shewanella oneidensis (strain ATCC 700550 / JCM 31522 / CIP 106686 / LMG 19005 / NCIMB 14063 / MR-1)).